The chain runs to 237 residues: MHPTAIAPGLIIQGFAPPLRLSDFKLIAFDMDSTLINIECVDEIADAVGRKREVAAITEAAMRGEITDYKESLRQRVALLQGVTEVQMNQIYQERMQFNPGAAELVAACKAAGLKVLLVSGGFTHFTDRVAQRLGIDYTRSNVLQIENGVLTGRMVDQPWGDICDGAEKRKMLLETCALLGIAPKQAIAVGDGANDLPMMREAGLSVAFHAKSAVRELANVSIESGGLDRLLELFQP.

Asp30 (nucleophile) is an active-site residue. Asp30 and Asp32 together coordinate Mg(2+). Asp32 functions as the Proton donor in the catalytic mechanism. Substrate-binding positions include Glu39, Arg76, 120-121 (SG), and Lys169. A Mg(2+)-binding site is contributed by Asp192. Asn195 serves as a coordination point for substrate.

Belongs to the HAD-like hydrolase superfamily. SerB family. It depends on Mg(2+) as a cofactor.

It catalyses the reaction O-phospho-L-serine + H2O = L-serine + phosphate. The enzyme catalyses O-phospho-D-serine + H2O = D-serine + phosphate. It participates in amino-acid biosynthesis; L-serine biosynthesis; L-serine from 3-phospho-D-glycerate: step 3/3. Catalyzes the dephosphorylation of phosphoserine (P-Ser) in vitro. Also catalyzes the dephosphorylation of phosphothreonine (P-Thr) in vitro. The sequence is that of Phosphoserine phosphatase from Albidiferax ferrireducens (strain ATCC BAA-621 / DSM 15236 / T118) (Rhodoferax ferrireducens).